A 618-amino-acid polypeptide reads, in one-letter code: Leucine aminopeptidase 2 (618 aa).

A peptide-binding positions include 139 to 141 (QCQ) and 271 to 276 (PYGGME). Residue His-300 participates in Zn(2+) binding. Glu-301 serves as the catalytic Proton acceptor. Residues His-304 and Glu-323 each coordinate Zn(2+). Residue Tyr-388 is the Proton donor of the active site.

Belongs to the peptidase M1 family. Requires Zn(2+) as cofactor.

Its subcellular location is the cytoplasm. It is found in the nucleus. The catalysed reaction is an epoxide + H2O = an ethanediol. Functionally, aminopeptidase that preferentially cleaves di- and tripeptides. Also has low epoxide hydrolase activity (in vitro). Can hydrolyze the epoxide leukotriene LTA(4) but it forms preferentially 5,6-dihydroxy-7,9,11,14-eicosatetraenoic acid rather than the cytokine leukotriene B(4) as the product compared to the homologous mammalian enzyme (in vitro). The polypeptide is Leucine aminopeptidase 2 (Aspergillus niger (strain ATCC MYA-4892 / CBS 513.88 / FGSC A1513)).